The following is a 528-amino-acid chain: Glucosidase 2 subunit beta (528 aa).

A signal peptide spans 1–14 (MLLPLLLLLPMCWA). At Ser-24 the chain carries Phosphoserine; by FAM20C. LDL-receptor class A domains follow at residues 37-71 (FTCL…AACP) and 72-113 (NGSF…VICE). Cystine bridges form between Cys-39-Cys-58 and Cys-56-Cys-70. Residue Asp-49 coordinates substrate. 6 residues coordinate Ca(2+): Gln-50, Asp-53, Tyr-55, Asp-57, Asp-63, and Glu-64. Asp-53 lines the substrate pocket. An N-linked (GlcNAc...) asparagine glycan is attached at Asn-72. 3 disulfides stabilise this stretch: Cys-77–Cys-99, Cys-97–Cys-112, and Cys-100–Cys-116. Residue Ser-89 is modified to Phosphoserine; by PKC. 6 residues coordinate Ca(2+): Arg-91, Asp-94, Val-96, Asp-98, Asp-104, and Glu-105. Lys-166 carries the N6-succinyllysine modification. Ser-168 is subject to Phosphoserine; by FAM20C. EF-hand domains lie at 209 to 244 (QEQE…DTDG) and 245 to 290 (DGAL…TDLP). Asp-222, Asp-224, Asp-226, Thr-228, and Glu-233 together coordinate Ca(2+). 2 disordered regions span residues 234–266 (LQTH…TDAT) and 281–357 (RSEA…DKMP). A compositionally biased stretch (low complexity) spans 247–258 (ALSEAEAQALLS). Residues 312–337 (TEEEEEEEEEEEEEAEEEEEEEDSEE) are compositionally biased toward acidic residues. Pro residues predominate over residues 338–348 (APPPLSPPQPA). Phosphoserine; by PKC is present on residues Ser-383 and Ser-390. In terms of domain architecture, MRH spans 413–514 (SQCYELTTNE…ELMTPAACPE (102 aa)). A disulfide bridge links Cys-415 with Cys-428. Position 434 is a phosphoserine; by PKC (Ser-434). Intrachain disulfides connect Cys-471–Cys-500 and Cys-485–Cys-512. The N-linked (GlcNAc...) asparagine glycan is linked to Asn-476. A Prevents secretion from ER motif is present at residues 525-528 (HDEL).

Heterodimer of a catalytic alpha subunit (GANAB) and a beta subunit (PRKCSH). Binds glycosylated PTPRC.

The protein localises to the endoplasmic reticulum. It functions in the pathway glycan metabolism; N-glycan metabolism. In terms of biological role, regulatory subunit of glucosidase II that cleaves sequentially the 2 innermost alpha-1,3-linked glucose residues from the Glc(2)Man(9)GlcNAc(2) oligosaccharide precursor of immature glycoproteins. Required for efficient PKD1/Polycystin-1 biogenesis and trafficking to the plasma membrane of the primary cilia. This is Glucosidase 2 subunit beta from Homo sapiens (Human).